Reading from the N-terminus, the 570-residue chain is Protein mom-5 (570 aa).

A signal peptide spans methionine 1–alanine 16. Over aspartate 17–arginine 230 the chain is Extracellular. One can recognise an FZ domain in the interval serine 32–lysine 148. Cystine bridges form between cysteine 37/cysteine 98, cysteine 45/cysteine 91, cysteine 82/cysteine 119, cysteine 108/cysteine 145, and cysteine 112/cysteine 136. N-linked (GlcNAc...) asparagine glycosylation occurs at asparagine 51. Residue asparagine 149 is glycosylated (N-linked (GlcNAc...) asparagine). The helical transmembrane segment at isoleucine 231–phenylalanine 251 threads the bilayer. Residues leucine 252–proline 264 are Cytoplasmic-facing. A helical membrane pass occupies residues isoleucine 265–glycine 285. Topologically, residues glutamate 286–tyrosine 319 are extracellular. Residues phenylalanine 320–alanine 340 traverse the membrane as a helical segment. Topologically, residues asparagine 341–serine 348 are cytoplasmic. A helical transmembrane segment spans residues isoleucine 349–valine 369. The Extracellular portion of the chain corresponds to threonine 370–alanine 395. A helical transmembrane segment spans residues leucine 396–valine 416. Over cysteine 417–arginine 449 the chain is Cytoplasmic. Residues isoleucine 450–tyrosine 470 form a helical membrane-spanning segment. The Extracellular portion of the chain corresponds to glutamine 471–glutamate 515. The chain crosses the membrane as a helical span at residues isoleucine 516 to tryptophan 536. The Cytoplasmic segment spans residues valine 537–arginine 570.

This sequence belongs to the G-protein coupled receptor Fz/Smo family.

It is found in the cell membrane. The protein localises to the early endosome. In terms of biological role, receptor for Wnt proteins. Most frizzled receptors are coupled to the beta-catenin canonical signaling pathway, which leads to the activation of disheveled proteins, inhibition of gsk-3 kinase, nuclear accumulation of beta-catenin and activation of Wnt target genes. A second signaling pathway involving PKC and calcium fluxes has been seen for some family members, but it is not yet clear if it represents a distinct pathway or if it can be integrated in the canonical pathway, as pkc seems to be required for Wnt-mediated inactivation of gsk-3 kinase. Both pathways seem to involve interactions with G-proteins. Required in embryonic development for the correct positioning and orientation of the mitotic spindles and division planes in blastomere cells. During early embryonic cell divisions, directs the asymmetric positioning of transcription factors such as pop-1 and dsh-2 in daughter cells in order to determine cell fate specification. Acts redundantly with other Wnt receptors such as lin-17 to control vulval precursor cell specification and also the polarity of different cell types including distal tip cells, seam cells, AVG interneurons and P-cells and their descendants. Plays a role in the migration of cell types including distal tip cells and the QR neuroblast descendants, QR.p and QR.pa during larval development. Negatively regulates the unc-6/Netrin receptors unc-5 and unc-40 to control distal tip cell polarity and migration. Acts through ced-5/DOCK180 and ced-10/Rac to control both distal tip cell migration and the phagocytic clearance of apoptotic cell corpses. Furthermore, it is also required for the migration and axon guidance of the different neuronal cell types including CAN, ALM, HSN and the two mechanosensory neurons AVM and PVM. Mediates Wnt receptor cfz-2 in directing ALM migration, but may also act redundantly with the Wnt receptors cfz-2 and mig-1 to direct the migration of other neuronal cell types including CAN and HSN. Mediates Wnt ligand egl-20 in the control of the anterior-posterior axon guidance of AVM and PVM neurons. The sequence is that of Protein mom-5 from Caenorhabditis elegans.